The following is a 365-amino-acid chain: tRNA/tmRNA (uracil-C(5))-methyltransferase (365 aa).

The S-adenosyl-L-methionine site is built by Gln189, Tyr217, Asn222, Glu238, and Asp298. Catalysis depends on Cys323, which acts as the Nucleophile. Glu357 acts as the Proton acceptor in catalysis.

This sequence belongs to the class I-like SAM-binding methyltransferase superfamily. RNA M5U methyltransferase family. TrmA subfamily.

It catalyses the reaction uridine(54) in tRNA + S-adenosyl-L-methionine = 5-methyluridine(54) in tRNA + S-adenosyl-L-homocysteine + H(+). It carries out the reaction uridine(341) in tmRNA + S-adenosyl-L-methionine = 5-methyluridine(341) in tmRNA + S-adenosyl-L-homocysteine + H(+). Its function is as follows. Dual-specificity methyltransferase that catalyzes the formation of 5-methyluridine at position 54 (m5U54) in all tRNAs, and that of position 341 (m5U341) in tmRNA (transfer-mRNA). This chain is tRNA/tmRNA (uracil-C(5))-methyltransferase, found in Pasteurella multocida (strain Pm70).